Reading from the N-terminus, the 325-residue chain is Putative metal ion transporter ZIPCO (325 aa).

The next 3 membrane-spanning stretches (helical) occupy residues 5-25 (TFLA…PAYI), 46-66 (IASG…VIIL), and 74-94 (LYYI…TDIL). Residues N106 and N160 are each glycosylated (N-linked (GlcNAc...) asparagine). Transmembrane regions (helical) follow at residues 179–199 (FFIV…MGSL), 239–259 (IYAW…IFSF), 264–284 (FVEI…SFNM), and 296–316 (HFIS…MILF).

It localises to the cytoplasmic vesicle membrane. Its function is as follows. Putative transporter for the divalent zinc and iron cations. This is Putative metal ion transporter ZIPCO from Plasmodium falciparum (isolate 3D7).